Here is a 564-residue protein sequence, read N- to C-terminus: Phenylalanine--tRNA ligase beta subunit (564 aa).

The 77-residue stretch at 286–362 (YFQNMLEVNV…IGMGLDSFKP (77 aa)) folds into the B5 domain. The Mg(2+) site is built by Asp340, Asp346, Glu349, and Glu350.

It belongs to the phenylalanyl-tRNA synthetase beta subunit family. Type 2 subfamily. As to quaternary structure, tetramer of two alpha and two beta subunits. Mg(2+) is required as a cofactor.

The protein resides in the cytoplasm. It catalyses the reaction tRNA(Phe) + L-phenylalanine + ATP = L-phenylalanyl-tRNA(Phe) + AMP + diphosphate + H(+). This chain is Phenylalanine--tRNA ligase beta subunit, found in Borrelia turicatae (strain 91E135).